Here is a 150-residue protein sequence, read N- to C-terminus: Large ribosomal subunit protein bL9 (150 aa).

It belongs to the bacterial ribosomal protein bL9 family.

Functionally, binds to the 23S rRNA. This is Large ribosomal subunit protein bL9 from Albidiferax ferrireducens (strain ATCC BAA-621 / DSM 15236 / T118) (Rhodoferax ferrireducens).